Reading from the N-terminus, the 698-residue chain is Capon-like protein (698 aa).

The 170-residue stretch at 25–194 (FFHGITFQAK…SELLDVEQIS (170 aa)) folds into the PID domain. Positions 191 to 240 (EQISEQQLSEDGERGGGDNETPKKEHLAITPDLNHTQPQRPNHLDIMPSH) are disordered. The span at 201-217 (DGERGGGDNETPKKEHL) shows a compositional bias: basic and acidic residues. 3 coiled-coil regions span residues 265 to 327 (RSEI…LASL), 379 to 484 (NQQL…LNAN), and 554 to 583 (LNED…GNLA). Residues 396–423 (SQHLQNLQQQQQQQQQQQQQQTQAAPTA) show a composition bias toward low complexity. The segment at 396–460 (SQHLQNLQQQ…QQQQQQQQDA (65 aa)) is disordered. The segment covering 436–447 (YPSMSALQSISN) has biased composition (polar residues). A compositionally biased stretch (low complexity) spans 448 to 458 (QLQQQQQQQQQ). Residues 588 to 698 (GGSTSTRDTS…RTTWARHTTK (111 aa)) form a disordered region. Residues 590–640 (STSTRDTSRSSSTLDSPSSPRLRSSNNNISPGSSNGNQNHNNNSNSNSSSS) are compositionally biased toward low complexity. 2 stretches are compositionally biased toward polar residues: residues 662-672 (LSATPSFITRS) and 679-698 (NRSQ…HTTK).

Expressed at higher level in wing imaginal disk.

Putative adapter protein. This chain is Capon-like protein, found in Drosophila melanogaster (Fruit fly).